A 349-amino-acid polypeptide reads, in one-letter code: 4-hydroxythreonine-4-phosphate dehydrogenase (349 aa).

Position 136 (T136) interacts with substrate. The a divalent metal cation site is built by H171, H216, and H281. 3 residues coordinate substrate: K289, N298, and R307.

The protein belongs to the PdxA family. As to quaternary structure, homodimer. It depends on a divalent metal cation as a cofactor.

It is found in the cytoplasm. The catalysed reaction is 4-(phosphooxy)-L-threonine + NAD(+) = 3-amino-2-oxopropyl phosphate + CO2 + NADH. It functions in the pathway cofactor biosynthesis; pyridoxine 5'-phosphate biosynthesis; pyridoxine 5'-phosphate from D-erythrose 4-phosphate: step 4/5. Functionally, catalyzes the NAD(P)-dependent oxidation of 4-(phosphooxy)-L-threonine (HTP) into 2-amino-3-oxo-4-(phosphooxy)butyric acid which spontaneously decarboxylates to form 3-amino-2-oxopropyl phosphate (AHAP). The chain is 4-hydroxythreonine-4-phosphate dehydrogenase from Synechocystis sp. (strain ATCC 27184 / PCC 6803 / Kazusa).